Here is a 462-residue protein sequence, read N- to C-terminus: Argininosuccinate lyase (462 aa).

It belongs to the lyase 1 family. Argininosuccinate lyase subfamily.

It is found in the cytoplasm. It carries out the reaction 2-(N(omega)-L-arginino)succinate = fumarate + L-arginine. The protein operates within amino-acid biosynthesis; L-arginine biosynthesis; L-arginine from L-ornithine and carbamoyl phosphate: step 3/3. The protein is Argininosuccinate lyase of Bacillus thuringiensis (strain Al Hakam).